We begin with the raw amino-acid sequence, 141 residues long: Flagellar assembly factor FliW (141 aa).

Belongs to the FliW family. As to quaternary structure, interacts with translational regulator CsrA and flagellin(s).

The protein localises to the cytoplasm. Its function is as follows. Acts as an anti-CsrA protein, binds CsrA and prevents it from repressing translation of its target genes, one of which is flagellin. Binds to flagellin and participates in the assembly of the flagellum. This Clostridium acetobutylicum (strain ATCC 824 / DSM 792 / JCM 1419 / IAM 19013 / LMG 5710 / NBRC 13948 / NRRL B-527 / VKM B-1787 / 2291 / W) protein is Flagellar assembly factor FliW.